A 98-amino-acid chain; its full sequence is Small ribosomal subunit protein uS17 (98 aa).

It belongs to the universal ribosomal protein uS17 family. In terms of assembly, part of the 30S ribosomal subunit.

Its function is as follows. One of the primary rRNA binding proteins, it binds specifically to the 5'-end of 16S ribosomal RNA. This chain is Small ribosomal subunit protein uS17, found in Leptothrix cholodnii (strain ATCC 51168 / LMG 8142 / SP-6) (Leptothrix discophora (strain SP-6)).